A 175-amino-acid polypeptide reads, in one-letter code: Transcriptional regulator GadE (175 aa).

One can recognise an HTH luxR-type domain in the interval 109–174 (HKNSQLCFSH…DIVTLGITSY (66 aa)). A DNA-binding region (H-T-H motif) is located at residues 133 to 152 (ESNITSTLNISQQTLKIQKF).

Functionally, regulates the expression of several genes involved in acid resistance. Required for the expression of gadA and gadBC, among others, regardless of media or growth conditions. Binds directly to the 20 bp GAD box found in the control regions of both loci. Could be involved in the regulation of the genes coding for the type III secretion system in enterohaemorragic strains. This is Transcriptional regulator GadE (gadE) from Escherichia coli O157:H7.